Here is a 96-residue protein sequence, read N- to C-terminus: Cytochrome oxidase assembly factor 4 (96 aa).

The 42-residue stretch at 36-77 (KTGCYVENLALQLCHAETGDWRQCFNEMALFRKCWEKNGNRE) folds into the CHCH domain. 2 short sequence motifs (cx9C motif) span residues 39–49 (CYVENLALQLC) and 59–69 (CFNEMALFRKC). 2 cysteine pairs are disulfide-bonded: C39–C69 and C49–C59.

This sequence belongs to the COA4 family.

It is found in the mitochondrion inner membrane. Its subcellular location is the mitochondrion intermembrane space. Functionally, involved in cytochrome c oxidase assembly or stability. This chain is Cytochrome oxidase assembly factor 4 (COA4), found in Saccharomyces cerevisiae (strain ATCC 204508 / S288c) (Baker's yeast).